We begin with the raw amino-acid sequence, 2189 residues long: Chromatin modification-related protein eaf-1 (2189 aa).

Disordered regions lie at residues 183–400, 415–438, and 477–601; these read VQGS…SGAE, VIGK…TQHP, and EVAK…PPGL. Positions 234 to 253 are enriched in low complexity; the sequence is PTPQTVAPPATAPTSTTKTA. Positions 260–277 are enriched in basic and acidic residues; it reads AGPKDDTVSRGDAEEKAR. Polar residues-rich tracts occupy residues 281–293, 300–312, and 319–333; these read TITS…SNGD, TLSS…QSAP, and ASAS…SQSF. The span at 336-349 shows a compositional bias: basic and acidic residues; sequence PVSRPEQELRRATT. The span at 534 to 543 shows a compositional bias: low complexity; it reads QPQPSSTAPS. Over residues 573–583 the composition is skewed to polar residues; the sequence is ETQARTSQSSH. Residues 722 to 797 enclose the HSA domain; that stretch reads PVRCLEPARP…PPVRAVDNAD (76 aa). The 61-residue stretch at 985-1045 folds into the Myb-like domain; that stretch reads FESRIASQWT…ECFERWVNLE (61 aa). Composition is skewed to low complexity over residues 1320-1330 and 1336-1406; these read VAVQLQQQQHQ and QHPQ…QVTQ. Disordered regions lie at residues 1320–1428, 1622–1644, 1663–1831, and 1846–2189; these read VAVQ…PMRP, MQTQ…QAQA, QKQA…GQVQ, and VQGQ…APTK. Composition is skewed to low complexity over residues 1663 to 1808, 1818 to 1831, 1846 to 1863, 1873 to 2089, and 2097 to 2189; these read QKQA…QGQG, GQGH…GQVQ, VQGQ…PQHA, QHAQ…QPQQ, and SQPQ…APTK.

The protein belongs to the EAF1 family. As to quaternary structure, component of the NuA4 histone acetyltransferase complex.

Its subcellular location is the nucleus. Its function is as follows. Component of the NuA4 histone acetyltransferase complex which is involved in transcriptional activation of selected genes principally by acetylation of nucleosomal histone H4 and H2A. The NuA4 complex is also involved in DNA repair. The polypeptide is Chromatin modification-related protein eaf-1 (eaf-1) (Neurospora crassa (strain ATCC 24698 / 74-OR23-1A / CBS 708.71 / DSM 1257 / FGSC 987)).